We begin with the raw amino-acid sequence, 529 residues long: Glycerol kinase 5 (529 aa).

The ATP site is built by S28 and S29. Glycerol contacts are provided by R98, D275, and Q276. T297, G340, and G440 together coordinate ATP.

Belongs to the FGGY kinase family.

It is found in the cytoplasm. The catalysed reaction is glycerol + ATP = sn-glycerol 3-phosphate + ADP + H(+). It functions in the pathway polyol metabolism; glycerol degradation via glycerol kinase pathway; sn-glycerol 3-phosphate from glycerol: step 1/1. Skin-specific kinase that plays a key role in glycerol metabolism, catalyzing its phosphorylation to produce sn-glycerol 3-phosphate. Involved in skin-specific regulation of sterol regulatory element-binding protein (SREBP) processing and lipid biosynthesis. The polypeptide is Glycerol kinase 5 (Homo sapiens (Human)).